The primary structure comprises 490 residues: MTQWEVVIGLETHAQLSTVSKIFSGASTQFGAEPNTQACPVDLALPGVLPVLNRGAVERAIRFGLAIGATVAPRSIFARKNYFYPDLPKGYQISQYEIPVVQGGQITIQVPANEKAGKQAYSKTVNLTRAHLEEDAGKSLHEDFAGMTGIDLNRAGTPLLEIVTEPEMRSAAEAVAYAKALHGLVVWLGICDGNMQEGSFRCDANVSVRPVGQEKFGTRAEIKNLNSFRFLEDAINYEVRRQIELIEDGGEVVQETRLYDPDKRETRSMRSKEDAHDYRYFPDPDLMPLVIGADWIERVKGEMPELPAAMQQRFVEQYGVSAYDAGVLTSTKAMAAYFEAVVAKAGAANAKIAANWLMGDVSSQLNRDGIDIDACPVSAAQLALVLQRIADGTISNKIAKEIFVAIWDEKAADEGAADRIIDAKGLKQISDTGALEAIIDEVLAANAKSVEEFRAGKEKAFNALVGQAMKATKGKANPQQVNELLKKKLG.

This sequence belongs to the GatB/GatE family. GatB subfamily. As to quaternary structure, heterotrimer of A, B and C subunits.

The catalysed reaction is L-glutamyl-tRNA(Gln) + L-glutamine + ATP + H2O = L-glutaminyl-tRNA(Gln) + L-glutamate + ADP + phosphate + H(+). It carries out the reaction L-aspartyl-tRNA(Asn) + L-glutamine + ATP + H2O = L-asparaginyl-tRNA(Asn) + L-glutamate + ADP + phosphate + 2 H(+). Its function is as follows. Allows the formation of correctly charged Asn-tRNA(Asn) or Gln-tRNA(Gln) through the transamidation of misacylated Asp-tRNA(Asn) or Glu-tRNA(Gln) in organisms which lack either or both of asparaginyl-tRNA or glutaminyl-tRNA synthetases. The reaction takes place in the presence of glutamine and ATP through an activated phospho-Asp-tRNA(Asn) or phospho-Glu-tRNA(Gln). The chain is Aspartyl/glutamyl-tRNA(Asn/Gln) amidotransferase subunit B from Burkholderia thailandensis (strain ATCC 700388 / DSM 13276 / CCUG 48851 / CIP 106301 / E264).